The sequence spans 222 residues: Thymidylate kinase (222 aa).

10-17 (GLEGAGKS) contributes to the ATP binding site.

Belongs to the thymidylate kinase family.

It carries out the reaction dTMP + ATP = dTDP + ADP. Its function is as follows. Phosphorylation of dTMP to form dTDP in both de novo and salvage pathways of dTTP synthesis. The chain is Thymidylate kinase from Alteromonas mediterranea (strain DSM 17117 / CIP 110805 / LMG 28347 / Deep ecotype).